Reading from the N-terminus, the 301-residue chain is Peptidyl-prolyl isomerase CWC27 (301 aa).

Residues 9–159 (TTAKCILYTT…YPAVLKDVEI (151 aa)) form the PPIase cyclophilin-type domain. The disordered stretch occupies residues 251–280 (TELHDNVDEATTKETESQENIKEEPMDKRE).

The protein belongs to the cyclophilin-type PPIase family. CWC27 subfamily. Belongs to the CWC complex (or CEF1-associated complex), a spliceosome subcomplex composed of the U2, U5 and U6 snRNAs and at least BUD13, BUD31, BRR2, CDC40, CEF1, CLF1, CUS1, CWC2, CWC15, CWC21, CWC22, CWC23, CWC24, CWC25, CWC27, ECM2, HSH155, IST3, ISY1, LEA1, MSL1, NTC20, PRP8, PRP9, PRP11, PRP19, PRP21, PRP22, PRP45, PRP46, SLU7, SMB1, SMD1, SMD2, SMD3, SMX2, SMX3, SNT309, SNU114, SPP2, SYF1, SYF2, RSE1 and YJU2.

It localises to the cytoplasm. The protein resides in the nucleus. The catalysed reaction is [protein]-peptidylproline (omega=180) = [protein]-peptidylproline (omega=0). Its function is as follows. PPIases accelerate the folding of proteins. Catalyzes the cis-trans isomerization of proline imidic peptide bonds in oligopeptides. Involved in pre-mRNA splicing. The protein is Peptidyl-prolyl isomerase CWC27 (CWC27) of Saccharomyces cerevisiae (strain ATCC 204508 / S288c) (Baker's yeast).